Consider the following 177-residue polypeptide: Early nodulin-like protein 6 (177 aa).

Residues 1 to 23 (MGGQKIVLLSIFVCFYVFSLVSC) form the signal peptide. Positions 24–127 (TEFEAGGENG…GQKMIIKVME (104 aa)) constitute a Phytocyanin domain. N-linked (GlcNAc...) asparagine glycosylation is present at asparagine 41. Cysteine 81 and cysteine 115 form a disulfide bridge. Residue asparagine 149 is the site of GPI-anchor amidated asparagine attachment. Positions 150-177 (HAVRKTSRFLGAGLVTISILVITVFSLV) are cleaved as a propeptide — removed in mature form.

Belongs to the early nodulin-like (ENODL) family. Confined to flowers.

Its subcellular location is the cell membrane. Its function is as follows. May act as a carbohydrate transporter. The protein is Early nodulin-like protein 6 of Arabidopsis thaliana (Mouse-ear cress).